Here is a 330-residue protein sequence, read N- to C-terminus: Ketol-acid reductoisomerase (NADP(+)) (330 aa).

Residues 2 to 182 enclose the KARI N-terminal Rossmann domain; the sequence is IHVYYDKDAN…GCTKAGVIET (181 aa). Residues 25–28, arginine 48, serine 51, serine 53, and 83–86 contribute to the NADP(+) site; these read YGSQ and DEVQ. The active site involves histidine 108. Position 134 (glycine 134) interacts with NADP(+). The KARI C-terminal knotted domain occupies 183–328; the sequence is TFKEETETDL…KKLRDMMPWI (146 aa). Mg(2+) contacts are provided by aspartate 191, glutamate 195, glutamate 227, and glutamate 231. Serine 252 contacts substrate.

This sequence belongs to the ketol-acid reductoisomerase family. Requires Mg(2+) as cofactor.

The catalysed reaction is (2R)-2,3-dihydroxy-3-methylbutanoate + NADP(+) = (2S)-2-acetolactate + NADPH + H(+). It carries out the reaction (2R,3R)-2,3-dihydroxy-3-methylpentanoate + NADP(+) = (S)-2-ethyl-2-hydroxy-3-oxobutanoate + NADPH + H(+). It participates in amino-acid biosynthesis; L-isoleucine biosynthesis; L-isoleucine from 2-oxobutanoate: step 2/4. Its pathway is amino-acid biosynthesis; L-valine biosynthesis; L-valine from pyruvate: step 2/4. Its function is as follows. Involved in the biosynthesis of branched-chain amino acids (BCAA). Catalyzes an alkyl-migration followed by a ketol-acid reduction of (S)-2-acetolactate (S2AL) to yield (R)-2,3-dihydroxy-isovalerate. In the isomerase reaction, S2AL is rearranged via a Mg-dependent methyl migration to produce 3-hydroxy-3-methyl-2-ketobutyrate (HMKB). In the reductase reaction, this 2-ketoacid undergoes a metal-dependent reduction by NADPH to yield (R)-2,3-dihydroxy-isovalerate. The polypeptide is Ketol-acid reductoisomerase (NADP(+)) (Halothermothrix orenii (strain H 168 / OCM 544 / DSM 9562)).